Reading from the N-terminus, the 1177-residue chain is Putative ATP-dependent RNA helicase TDRD12 (1177 aa).

One can recognise a Tudor 1 domain in the interval 56 to 118; the sequence is TLEEGQVCVV…RVVVESFMQL (63 aa). Residues 447–635 enclose the Helicase ATP-binding domain; that stretch reads WPPIARGCDV…KEFMNDPYIV (189 aa). 460–467 provides a ligand contact to ATP; the sequence is SHCESNPL. A DEAH box motif is present at residues 574 to 577; the sequence is DEVE. The Tudor 2 domain maps to 900–999; sequence IVDKHMDLYA…HTLPPQAVEF (100 aa). Residues 1098–1177 form a disordered region; that stretch reads EESLSQTPPR…VFKRWLSSNR (80 aa). Polar residues predominate over residues 1100–1115; it reads SLSQTPPRVTGTSPAQ.

As to quaternary structure, component of a mRNP complex containing PIWIL2, TDRD1 and piRNAs. Component of the PET complex, at least composed of EXD1, PIWIL2, TDRD12 and piRNAs.

It catalyses the reaction ATP + H2O = ADP + phosphate + H(+). Functionally, probable ATP-binding RNA helicase required during spermatogenesis to repress transposable elements and preventing their mobilization, which is essential for the germline integrity. Acts via the piRNA metabolic process, which mediates the repression of transposable elements during meiosis by forming complexes composed of piRNAs and Piwi proteins and governs the methylation and subsequent repression of transposons. Involved in the secondary piRNAs metabolic process. Acts via the PET complex, a multiprotein complex required during the secondary piRNAs metabolic process for the PIWIL2 slicing-triggered loading of PIWIL4 piRNAs. The polypeptide is Putative ATP-dependent RNA helicase TDRD12 (TDRD12) (Homo sapiens (Human)).